Reading from the N-terminus, the 732-residue chain is Subtilisin-like protease SBT4.13 (732 aa).

An N-terminal signal peptide occupies residues 1-24 (MATLAASSSLLSCLLVLFLSSVSA). The propeptide at 25-109 (VTDDKQVYIV…VFPNKKLQLQ (85 aa)) is activation peptide. The 78-residue stretch at 31–108 (VYIVYMGSLS…SVFPNKKLQL (78 aa)) folds into the Inhibitor I9 domain. One can recognise a Peptidase S8 domain in the interval 113–579 (SWDFMGLKEG…SGHVDPIAAS (467 aa)). The active-site Charge relay system is D141. N172 carries N-linked (GlcNAc...) asparagine glycosylation. H196 functions as the Charge relay system in the catalytic mechanism. An N-linked (GlcNAc...) asparagine glycan is attached at N219. The region spanning 352-436 (DYPLVYGKSA…GLLTEDFESL (85 aa)) is the PA domain. Residue N458 is glycosylated (N-linked (GlcNAc...) asparagine). S518 acts as the Charge relay system in catalysis. N-linked (GlcNAc...) asparagine glycans are attached at residues N555, N600, N648, and N658.

It belongs to the peptidase S8 family. In terms of processing, the C-terminal propeptide is autocleaved.

The protein localises to the secreted. In Arabidopsis thaliana (Mouse-ear cress), this protein is Subtilisin-like protease SBT4.13.